The following is a 315-amino-acid chain: Small ribosomal subunit protein uS2 (315 aa).

The disordered stretch occupies residues Leu-250–Glu-315. Composition is skewed to basic and acidic residues over residues Val-272 to Asp-282 and Thr-297 to Glu-315.

It belongs to the universal ribosomal protein uS2 family.

The protein is Small ribosomal subunit protein uS2 of Clavibacter michiganensis subsp. michiganensis (strain NCPPB 382).